A 190-amino-acid polypeptide reads, in one-letter code: Spermatogenesis-associated protein 12 (190 aa).

Expressed in testis.

This is Spermatogenesis-associated protein 12 (SPATA12) from Homo sapiens (Human).